A 434-amino-acid chain; its full sequence is Serine--tRNA ligase (434 aa).

239 to 241 (TAE) provides a ligand contact to L-serine. 270-272 (RSE) provides a ligand contact to ATP. Position 293 (E293) interacts with L-serine. 357 to 360 (EISS) is an ATP binding site. An L-serine-binding site is contributed by S393.

This sequence belongs to the class-II aminoacyl-tRNA synthetase family. Type-1 seryl-tRNA synthetase subfamily. Homodimer. The tRNA molecule binds across the dimer.

The protein localises to the cytoplasm. The catalysed reaction is tRNA(Ser) + L-serine + ATP = L-seryl-tRNA(Ser) + AMP + diphosphate + H(+). The enzyme catalyses tRNA(Sec) + L-serine + ATP = L-seryl-tRNA(Sec) + AMP + diphosphate + H(+). It functions in the pathway aminoacyl-tRNA biosynthesis; selenocysteinyl-tRNA(Sec) biosynthesis; L-seryl-tRNA(Sec) from L-serine and tRNA(Sec): step 1/1. Catalyzes the attachment of serine to tRNA(Ser). Is also able to aminoacylate tRNA(Sec) with serine, to form the misacylated tRNA L-seryl-tRNA(Sec), which will be further converted into selenocysteinyl-tRNA(Sec). The sequence is that of Serine--tRNA ligase from Mesorhizobium japonicum (strain LMG 29417 / CECT 9101 / MAFF 303099) (Mesorhizobium loti (strain MAFF 303099)).